We begin with the raw amino-acid sequence, 519 residues long: Acetylcholine receptor subunit gamma (519 aa).

The N-terminal stretch at 1–22 (MCGGQRPLFLLPLLAVCLGAKG) is a signal peptide. Residues 23 to 240 (RNQEERLLGD…VVFYLLIQRK (218 aa)) lie on the Extracellular side of the membrane. N-linked (GlcNAc...) asparagine glycans are attached at residues Asn-52 and Asn-163. Cys-150 and Cys-164 form a disulfide bridge. A run of 3 helical transmembrane segments spans residues 241–265 (PLFY…IYFL), 274–292 (CTVA…FLVA), and 308–329 (YLTF…VLNV). Topologically, residues 330 to 476 (SLRSPHTHSM…WFLVGRVLDR (147 aa)) are cytoplasmic. A helical transmembrane segment spans residues 477–497 (VCFLAMLSLFVCGTAGIFLMA).

It belongs to the ligand-gated ion channel (TC 1.A.9) family. Acetylcholine receptor (TC 1.A.9.1) subfamily. Gamma/CHRNG sub-subfamily. Pentamer of two alpha chains, and one each of the beta, delta, and gamma (in immature muscle) or epsilon (in mature muscle) chains.

The protein localises to the postsynaptic cell membrane. It is found in the cell membrane. It carries out the reaction K(+)(in) = K(+)(out). The enzyme catalyses Na(+)(in) = Na(+)(out). In terms of biological role, after binding acetylcholine, the AChR responds by an extensive change in conformation that affects all subunits and leads to opening of an ion-conducting channel across the plasma membrane. The sequence is that of Acetylcholine receptor subunit gamma (CHRNG) from Bos taurus (Bovine).